The sequence spans 24 residues: Gaegurin-6 (24 aa).

Residues cysteine 18 and cysteine 24 are joined by a disulfide bond.

This sequence belongs to the frog skin active peptide (FSAP) family. Brevinin subfamily. In terms of assembly, monomer. In terms of tissue distribution, expressed by the skin glands.

Its subcellular location is the secreted. Has a non-hemolytic activity. Has a broad spectrum of activity against both Gram-positive and Gram-negative bacteria, fungi and protozoa. This chain is Gaegurin-6 (GGN6), found in Glandirana rugosa (Japanese wrinkled frog).